Here is a 174-residue protein sequence, read N- to C-terminus: Peptide methionine sulfoxide reductase MsrA (174 aa).

Residue cysteine 11 is part of the active site.

It belongs to the MsrA Met sulfoxide reductase family.

It catalyses the reaction L-methionyl-[protein] + [thioredoxin]-disulfide + H2O = L-methionyl-(S)-S-oxide-[protein] + [thioredoxin]-dithiol. The enzyme catalyses [thioredoxin]-disulfide + L-methionine + H2O = L-methionine (S)-S-oxide + [thioredoxin]-dithiol. Functionally, has an important function as a repair enzyme for proteins that have been inactivated by oxidation. Catalyzes the reversible oxidation-reduction of methionine sulfoxide in proteins to methionine. The polypeptide is Peptide methionine sulfoxide reductase MsrA (Haloquadratum walsbyi (strain DSM 16790 / HBSQ001)).